Consider the following 275-residue polypeptide: Peptidoglycan-N-acetylglucosamine deacetylase BC_1960 (275 aa).

In terms of domain architecture, NodB homology spans 81–262 (AEVALTFDDG…QLKTKGARFV (182 aa)). Catalysis depends on aspartate 88, which acts as the Proton acceptor. Residues aspartate 89, histidine 139, and histidine 143 each coordinate Zn(2+). Residue proline 179 is modified to 2-hydroxyproline; partial. Catalysis depends on histidine 233, which acts as the Proton donor.

This sequence belongs to the polysaccharide deacetylase family. Zn(2+) is required as a cofactor. Hydroxylated on Pro-179. Hydroxylation alters the active site and enhances significantly deacetylase activity, probably by creating a more favorable environment for transition-state stabilization. It might be autocatalytic.

The catalysed reaction is peptidoglycan-N-acetyl-D-glucosamine + H2O = peptidoglycan-D-glucosamine + acetate.. With respect to regulation, deacetylase activity is stimulated by hydroxylation on Pro-179. Inhibited by CuCl(2) and ZnCl(2). Inhibited by the hydroxamate N-hydroxy-4-(naphthalene-1-yl)benzamide (NHNB). Functionally, catalyzes the deacetylation of N-acetylglucosamine (GlcNAc) residues in peptidoglycan. Also acts on soluble chitin substrates and N-acetylchitooligomers. Acts on cell wall peptidoglycan from the Gram-positive bacteria B.cereus and B.subtilis and the Gram-negative bacterium H.pylori. Not active on acetylated xylan. The sequence is that of Peptidoglycan-N-acetylglucosamine deacetylase BC_1960 from Bacillus cereus (strain ATCC 14579 / DSM 31 / CCUG 7414 / JCM 2152 / NBRC 15305 / NCIMB 9373 / NCTC 2599 / NRRL B-3711).